An 84-amino-acid polypeptide reads, in one-letter code: MNYFILLFVATFLLLDVNCKKDGYPVDANNCKFECWKNEYCDELCKAKRAESGYCYKLKLSCWCEGLPDDEPTKTSDRCYGTGR.

The signal sequence occupies residues 1–19 (MNYFILLFVATFLLLDVNC). Residues 21 to 80 (KDGYPVDANNCKFECWKNEYCDELCKAKRAESGYCYKLKLSCWCEGLPDDEPTKTSDRCY) enclose the LCN-type CS-alpha/beta domain. Cystine bridges form between Cys31–Cys79, Cys35–Cys55, Cys41–Cys62, and Cys45–Cys64. Thr82 carries the threonine amide modification.

This sequence belongs to the long (4 C-C) scorpion toxin superfamily. Sodium channel inhibitor family. Alpha subfamily. As to expression, expressed by the venom gland.

The protein localises to the secreted. Alpha toxins bind voltage-independently at site-3 of sodium channels (Nav) and inhibit the inactivation of the activated channels, thereby blocking neuronal transmission. Is possibly toxic to mice. The protein is Beta-toxin Ct16 of Centruroides tecomanus (Scorpion).